The following is a 151-amino-acid chain: Probable transcriptional regulator syrB2 (151 aa).

Residues 1-61 are disordered; that stretch reads MADESNTGSI…PRRYSEQQRK (61 aa). Positions 11-23 are enriched in low complexity; sequence AAAVAPNADVKAP. A compositionally biased stretch (basic residues) spans 24-35; it reads AAKKKRSPRRQK.

Belongs to the SyrB family.

Seems to affect the transcription of cya3. May be negatively autoregulated. The polypeptide is Probable transcriptional regulator syrB2 (syrB2) (Rhizobium meliloti (strain 1021) (Ensifer meliloti)).